The sequence spans 254 residues: MPSNMNNKLDPVFSSGFVRREFNDSGIADGKLRTISTSSCATTMSSESYRISLGVGPLWWSDVPVHHRTDHDRASLLTGYSRKSSVDSAGGSLYEASSRASSLSSSQSDCSDLESQPDIHSLCSDDDCQEVLRQILQHDQPVQITIKLHVTEDQYTNWNTILNPVNNLLYVALPKDLPPAGSKQTFISLLEFAEEKLEVDGIVMVMPKDQPDRARLIEAFLFMGFEPLSRKAPQAPPAAINDNENYYFLYSIEE.

This sequence belongs to the ODC antizyme family. As to quaternary structure, interacts with ODC1 and thereby sterically blocks ODC homodimerization.

Its function is as follows. Ornithine decarboxylase (ODC) antizyme protein that negatively regulates ODC activity and intracellular polyamine biosynthesis and uptake in response to increased intracellular polyamine levels. Binds to ODC monomers, inhibiting the assembly of the functional ODC homodimer, and targets the monomers for ubiquitin-independent proteolytic destruction by the 26S proteasome. Required for cellular differentiation in neuronal and myogenic lineages during embryonic development. The polypeptide is Ornithine decarboxylase antizyme (Oda) (Drosophila melanogaster (Fruit fly)).